Consider the following 267-residue polypeptide: 4-hydroxy-tetrahydrodipicolinate reductase (267 aa).

Gly11–Met16 serves as a coordination point for NAD(+). Arg39 is a binding site for NADP(+). Residues Gly100–Thr102 and Ala126–Phe129 contribute to the NAD(+) site. Catalysis depends on His156, which acts as the Proton donor/acceptor. His157 lines the (S)-2,3,4,5-tetrahydrodipicolinate pocket. Residue Lys160 is the Proton donor of the active site. Residue Gly166–Thr167 coordinates (S)-2,3,4,5-tetrahydrodipicolinate.

The protein belongs to the DapB family.

It localises to the cytoplasm. It catalyses the reaction (S)-2,3,4,5-tetrahydrodipicolinate + NAD(+) + H2O = (2S,4S)-4-hydroxy-2,3,4,5-tetrahydrodipicolinate + NADH + H(+). It carries out the reaction (S)-2,3,4,5-tetrahydrodipicolinate + NADP(+) + H2O = (2S,4S)-4-hydroxy-2,3,4,5-tetrahydrodipicolinate + NADPH + H(+). It functions in the pathway amino-acid biosynthesis; L-lysine biosynthesis via DAP pathway; (S)-tetrahydrodipicolinate from L-aspartate: step 4/4. In terms of biological role, catalyzes the conversion of 4-hydroxy-tetrahydrodipicolinate (HTPA) to tetrahydrodipicolinate. This is 4-hydroxy-tetrahydrodipicolinate reductase from Moorella thermoacetica (strain ATCC 39073 / JCM 9320).